The sequence spans 149 residues: Ribonuclease H (149 aa).

The 143-residue stretch at 1-143 (MNQVVIYTDG…ADALANKGVD (143 aa)) folds into the RNase H type-1 domain. Mg(2+) is bound by residues Asp-9, Glu-47, Asp-69, and Asp-135.

The protein belongs to the RNase H family. In terms of assembly, monomer. Mg(2+) is required as a cofactor.

It is found in the cytoplasm. The enzyme catalyses Endonucleolytic cleavage to 5'-phosphomonoester.. In terms of biological role, endonuclease that specifically degrades the RNA of RNA-DNA hybrids. The sequence is that of Ribonuclease H from Paracidovorax citrulli (strain AAC00-1) (Acidovorax citrulli).